Reading from the N-terminus, the 287-residue chain is 4-hydroxybenzoate octaprenyltransferase (287 aa).

Transmembrane regions (helical) follow at residues 41-61 (LPLL…GCAI), 92-112 (VALA…LNAL), 133-153 (FFAI…PMAF), 160-180 (VPML…AYDT), 218-238 (LGIY…WLGW), and 267-287 (NNWL…ATWF).

It belongs to the UbiA prenyltransferase family. The cofactor is Mg(2+).

The protein localises to the cell inner membrane. It carries out the reaction all-trans-octaprenyl diphosphate + 4-hydroxybenzoate = 4-hydroxy-3-(all-trans-octaprenyl)benzoate + diphosphate. It participates in cofactor biosynthesis; ubiquinone biosynthesis. Catalyzes the prenylation of para-hydroxybenzoate (PHB) with an all-trans polyprenyl group. Mediates the second step in the final reaction sequence of ubiquinone-8 (UQ-8) biosynthesis, which is the condensation of the polyisoprenoid side chain with PHB, generating the first membrane-bound Q intermediate 3-octaprenyl-4-hydroxybenzoate. The polypeptide is 4-hydroxybenzoate octaprenyltransferase (Paraburkholderia xenovorans (strain LB400)).